The primary structure comprises 553 residues: Probable bifunctional riboflavin biosynthesis protein RIBA 2, chloroplastic (553 aa).

The transit peptide at M1–A56 directs the protein to the chloroplast. A DHBP synthase region spans residues D62 to K336. The interval Y70–P90 is disordered. A compositionally biased stretch (polar residues) spans G72–R85. Residues R160–E161, D165, R275–T279, and E299 each bind D-ribulose 5-phosphate. E161 is a Mg(2+) binding site. H278 is a Mg(2+) binding site. The GTP cyclohydrolase II stretch occupies residues R337 to H553. R387–E391 provides a ligand contact to GTP. Zn(2+) contacts are provided by C392, C403, and C405. Residues Q408, E431–R433, and T453 contribute to the GTP site. D465 (proton acceptor; for GTP cyclohydrolase activity) is an active-site residue. R467 functions as the Nucleophile; for GTP cyclohydrolase activity in the catalytic mechanism. 2 residues coordinate GTP: T488 and K493.

This sequence in the N-terminal section; belongs to the DHBP synthase family. It in the C-terminal section; belongs to the GTP cyclohydrolase II family. Mg(2+) is required as a cofactor. Mn(2+) serves as cofactor. It depends on Zn(2+) as a cofactor.

The protein localises to the plastid. It is found in the chloroplast. It catalyses the reaction D-ribulose 5-phosphate = (2S)-2-hydroxy-3-oxobutyl phosphate + formate + H(+). It carries out the reaction GTP + 4 H2O = 2,5-diamino-6-hydroxy-4-(5-phosphoribosylamino)-pyrimidine + formate + 2 phosphate + 3 H(+). Its pathway is cofactor biosynthesis; riboflavin biosynthesis; 2-hydroxy-3-oxobutyl phosphate from D-ribulose 5-phosphate: step 1/1. It participates in cofactor biosynthesis; riboflavin biosynthesis; 5-amino-6-(D-ribitylamino)uracil from GTP: step 1/4. In terms of biological role, involved in riboflavin biosynthesis. Catalyzes both the conversion of D-ribulose 5-phosphate to formate and 3,4-dihydroxy-2-butanone 4-phosphate and the conversion of GTP to 2,5-diamino-6-ribosylamino-4(3H)-pyrimidinone 5'-phosphate (DARP), formate and pyrophosphate. The chain is Probable bifunctional riboflavin biosynthesis protein RIBA 2, chloroplastic (RIBA2) from Oryza sativa subsp. japonica (Rice).